The sequence spans 610 residues: Elongation factor 4 (610 aa).

One can recognise a tr-type G domain in the interval 13–195 (SHIRNFSIVA…AIVHKLPAPK (183 aa)). GTP-binding positions include 25–30 (DHGKST) and 142–145 (NKID).

It belongs to the TRAFAC class translation factor GTPase superfamily. Classic translation factor GTPase family. LepA subfamily.

Its subcellular location is the cell inner membrane. The catalysed reaction is GTP + H2O = GDP + phosphate + H(+). Required for accurate and efficient protein synthesis under certain stress conditions. May act as a fidelity factor of the translation reaction, by catalyzing a one-codon backward translocation of tRNAs on improperly translocated ribosomes. Back-translocation proceeds from a post-translocation (POST) complex to a pre-translocation (PRE) complex, thus giving elongation factor G a second chance to translocate the tRNAs correctly. Binds to ribosomes in a GTP-dependent manner. This is Elongation factor 4 from Rhizobium johnstonii (strain DSM 114642 / LMG 32736 / 3841) (Rhizobium leguminosarum bv. viciae).